The chain runs to 223 residues: Imidazoleglycerol-phosphate dehydratase (223 aa).

Belongs to the imidazoleglycerol-phosphate dehydratase family.

It carries out the reaction D-erythro-1-(imidazol-4-yl)glycerol 3-phosphate = 3-(imidazol-4-yl)-2-oxopropyl phosphate + H2O. It functions in the pathway amino-acid biosynthesis; L-histidine biosynthesis; L-histidine from 5-phospho-alpha-D-ribose 1-diphosphate: step 6/9. The sequence is that of Imidazoleglycerol-phosphate dehydratase (HIS3) from Zygosaccharomyces bailii.